A 224-amino-acid polypeptide reads, in one-letter code: ATP phosphoribosyltransferase (224 aa).

It belongs to the ATP phosphoribosyltransferase family. Short subfamily. Heteromultimer composed of HisG and HisZ subunits.

The protein resides in the cytoplasm. The catalysed reaction is 1-(5-phospho-beta-D-ribosyl)-ATP + diphosphate = 5-phospho-alpha-D-ribose 1-diphosphate + ATP. It functions in the pathway amino-acid biosynthesis; L-histidine biosynthesis; L-histidine from 5-phospho-alpha-D-ribose 1-diphosphate: step 1/9. Its function is as follows. Catalyzes the condensation of ATP and 5-phosphoribose 1-diphosphate to form N'-(5'-phosphoribosyl)-ATP (PR-ATP). Has a crucial role in the pathway because the rate of histidine biosynthesis seems to be controlled primarily by regulation of HisG enzymatic activity. This chain is ATP phosphoribosyltransferase, found in Cupriavidus taiwanensis (strain DSM 17343 / BCRC 17206 / CCUG 44338 / CIP 107171 / LMG 19424 / R1) (Ralstonia taiwanensis (strain LMG 19424)).